An 837-amino-acid polypeptide reads, in one-letter code: V-type proton ATPase 116 kDa subunit a 1 (837 aa).

Topologically, residues 1 to 388 are cytoplasmic; the sequence is MGELFRSEEM…DAYGIGSYRE (388 aa). The chain crosses the membrane as a helical span at residues 389–407; that stretch reads INPAPYTIITFPFLFAVMF. The Vacuolar portion of the chain corresponds to 408–409; the sequence is GD. The helical transmembrane segment at 410–426 threads the bilayer; the sequence is FGHGILMTLFAVWMVVR. Residues 427–441 lie on the Cytoplasmic side of the membrane; that stretch reads ESRILSQKIDNELFT. The helical transmembrane segment at 442–471 threads the bilayer; it reads MMFSGRYIILLMGLFSIYTGLIYNDCFSKA. At 472 to 534 the chain is on the vacuolar side; the sequence is LNLFGSSWSV…ATNKLTFLNS (63 aa). A helical transmembrane segment spans residues 535 to 554; that stretch reads FKMKMSVVLGIIHMTFGVAL. The Cytoplasmic segment spans residues 555 to 572; the sequence is SLLNHIYFKKPLNIYLGF. A helical transmembrane segment spans residues 573-593; that stretch reads IPEMIFMTTLFGYLVILIIYK. Residues 594-638 lie on the Vacuolar side of the membrane; the sequence is WCAYDASTSMVAPSLLIHFINMFLFSYQDTSLPMLYKGQMGLQCF. Residues 639 to 658 form a helical membrane-spanning segment; it reads LVVCAIICVPWMLVVKPLIL. The Cytoplasmic segment spans residues 659–724; it reads RRQYLRRKHL…DTVVHQAIHT (66 aa). The chain crosses the membrane as a helical span at residues 725-749; sequence IEYCLGCISNTASYLRLWALSLAHA. Over 750-770 the chain is Vacuolar; it reads QLSEVLWTMVMHVGLSIRSLG. A helical membrane pass occupies residues 771 to 809; sequence GGIALVFVFSAFATLTIAILLIMEGLSAFLHALRLHWVE. The Cytoplasmic segment spans residues 810–837; it reads FQNKFYMGTGFKFLPFSFENIREGKFDE.

It belongs to the V-ATPase 116 kDa subunit family. As to quaternary structure, V-ATPase is a heteromultimeric enzyme made up of two complexes: the ATP-hydrolytic V1 complex and the proton translocation V0 complex. The V1 complex consists of three catalytic AB heterodimers that form a heterohexamer, three peripheral stalks each consisting of EG heterodimers, one central rotor including subunits D and F, and the regulatory subunits C and H. The proton translocation complex V0 consists of the proton transport subunit a, a ring of proteolipid subunits c9c'', rotary subunit d, subunits e and f, and two accessory subunits.

The protein localises to the cytoplasmic vesicle. It localises to the clathrin-coated vesicle membrane. Its subcellular location is the secretory vesicle. The protein resides in the synaptic vesicle membrane. It is found in the melanosome. Its function is as follows. Subunit of the V0 complex of vacuolar(H+)-ATPase (V-ATPase), a multisubunit enzyme composed of a peripheral complex (V1) that hydrolyzes ATP and a membrane integral complex (V0) that translocates protons. V-ATPase is responsible for acidifying and maintaining the pH of intracellular compartments and in some cell types, is targeted to the plasma membrane, where it is responsible for acidifying the extracellular environment. Required for assembly and activity of the vacuolar ATPase. This is V-type proton ATPase 116 kDa subunit a 1 (atp6v0a1) from Xenopus tropicalis (Western clawed frog).